The primary structure comprises 104 residues: N(2)-fixation sustaining protein CowN (104 aa).

The protein belongs to the CowN family.

Is required to sustain N(2)-dependent growth in the presence of low levels of carbon monoxide (CO). Probably acts by protecting the N(2) fixation ability of the nitrogenase complex, which is inactivated in the presence of CO. The protein is N(2)-fixation sustaining protein CowN of Arcobacter nitrofigilis (strain ATCC 33309 / DSM 7299 / CCUG 15893 / LMG 7604 / NCTC 12251 / CI) (Campylobacter nitrofigilis).